Reading from the N-terminus, the 594-residue chain is Protein FAM200C (594 aa).

The polypeptide is Protein FAM200C (Homo sapiens (Human)).